We begin with the raw amino-acid sequence, 375 residues long: Muconate cycloisomerase 1 (375 aa).

K171 serves as the catalytic Proton acceptor. Mn(2+) is bound by residues D200, E226, and D251. The active-site Proton donor is the E329.

It belongs to the mandelate racemase/muconate lactonizing enzyme family. Homooctamer. It depends on Mn(2+) as a cofactor.

It catalyses the reaction (S)-muconolactone = cis,cis-muconate + H(+). It participates in aromatic compound metabolism; beta-ketoadipate pathway; 5-oxo-4,5-dihydro-2-furylacetate from catechol: step 2/3. In terms of biological role, catalyzes a syn cycloisomerization. The polypeptide is Muconate cycloisomerase 1 (catB) (Pseudomonas putida (Arthrobacter siderocapsulatus)).